Reading from the N-terminus, the 82-residue chain is Large ribosomal subunit protein bL31B (82 aa).

It belongs to the bacterial ribosomal protein bL31 family. Type B subfamily. As to quaternary structure, part of the 50S ribosomal subunit.

The protein is Large ribosomal subunit protein bL31B of Pectobacterium carotovorum subsp. carotovorum (strain PC1).